The following is a 360-amino-acid chain: MRVFNFSAGPAAMPEEVLRQAADEMLDWHGSGMSVMEMSHRGKEFMSIHEAALTDLRDLLGVPASHRILFLQGGGIAENAIVPMNLLGARKTADFVVTGSWSQKSFGEAKKFCTPHLAASGKTEAGFTRAPARAEWQLSDDPAYVHLCTNETIDGVETFEIPDLGDVPLVADVSSHILSRPMDVAKYGVLFGGAQKNIGMAGVTVVIVREDLLDRALSICPSAFEWKTVAANNSLYNTPPTYAIYIAGLVFQWLKRQGGLEAIEARNIEKSKLLYDTIDASSFYLNKVEPAARSRMNVPFFLADETRNEDFLAGAKARGLLQLKGHKSVGGMRASIYNAVPLEGVKALVEYMKDFEQRGA.

An L-glutamate-binding site is contributed by R41. Pyridoxal 5'-phosphate contacts are provided by W101, T152, D172, and Q195. Position 196 is an N6-(pyridoxal phosphate)lysine (K196). 237–238 (NT) contributes to the pyridoxal 5'-phosphate binding site.

The protein belongs to the class-V pyridoxal-phosphate-dependent aminotransferase family. SerC subfamily. In terms of assembly, homodimer. The cofactor is pyridoxal 5'-phosphate.

It is found in the cytoplasm. The catalysed reaction is O-phospho-L-serine + 2-oxoglutarate = 3-phosphooxypyruvate + L-glutamate. It carries out the reaction 4-(phosphooxy)-L-threonine + 2-oxoglutarate = (R)-3-hydroxy-2-oxo-4-phosphooxybutanoate + L-glutamate. Its pathway is amino-acid biosynthesis; L-serine biosynthesis; L-serine from 3-phospho-D-glycerate: step 2/3. It functions in the pathway cofactor biosynthesis; pyridoxine 5'-phosphate biosynthesis; pyridoxine 5'-phosphate from D-erythrose 4-phosphate: step 3/5. Its function is as follows. Catalyzes the reversible conversion of 3-phosphohydroxypyruvate to phosphoserine and of 3-hydroxy-2-oxo-4-phosphonooxybutanoate to phosphohydroxythreonine. In Burkholderia orbicola (strain MC0-3), this protein is Phosphoserine aminotransferase.